The sequence spans 315 residues: Ester hydrolase C11orf54 homolog (315 aa).

The Zn(2+) site is built by His-266, His-268, and His-278.

As to quaternary structure, monomer.

The protein localises to the nucleus. Its function is as follows. Exhibits ester hydrolase activity on the substrate p-nitrophenyl acetate. The sequence is that of Ester hydrolase C11orf54 homolog from Bos taurus (Bovine).